Reading from the N-terminus, the 173-residue chain is Superoxide dismutase [Cu-Zn] (173 aa).

Residues 1 to 22 (MNKAKTLLFTALAFGLSHQALA) form the signal peptide. Residues histidine 67, histidine 69, and histidine 92 each coordinate Cu cation. Cysteine 74 and cysteine 169 are joined by a disulfide. 4 residues coordinate Zn(2+): histidine 92, histidine 101, histidine 110, and aspartate 113. Histidine 147 provides a ligand contact to Cu cation.

It belongs to the Cu-Zn superoxide dismutase family. As to quaternary structure, homodimer. It depends on Cu cation as a cofactor. Zn(2+) serves as cofactor.

It localises to the periplasm. It carries out the reaction 2 superoxide + 2 H(+) = H2O2 + O2. Its function is as follows. Destroys radicals which are normally produced within the cells and which are toxic to biological systems. This chain is Superoxide dismutase [Cu-Zn] (sodC), found in Photobacterium leiognathi.